The following is a 532-amino-acid chain: Fatty-acid amide hydrolase 2-A (532 aa).

Residues 9 to 29 (FLGRLLRAVVWILFAAFKLFA) form a helical membrane-spanning segment. Residues Lys129 and Ser204 each act as charge relay system in the active site. Ser228 serves as the catalytic Acyl-ester intermediate.

The protein belongs to the amidase family.

It localises to the membrane. The catalysed reaction is N-(5Z,8Z,11Z,14Z-eicosatetraenoyl)-ethanolamine + H2O = ethanolamine + (5Z,8Z,11Z,14Z)-eicosatetraenoate. It catalyses the reaction (9Z)-octadecenamide + H2O = (9Z)-octadecenoate + NH4(+). The chain is Fatty-acid amide hydrolase 2-A (faah2a) from Danio rerio (Zebrafish).